We begin with the raw amino-acid sequence, 35 residues long: Kappa-theraphotoxin-Tb1c (35 aa).

3 disulfide bridges follow: Cys-3–Cys-18, Cys-10–Cys-23, and Cys-17–Cys-30.

Belongs to the neurotoxin 10 (Hwtx-1) family. 59 (Tltx) subfamily. In terms of assembly, monomer. In terms of tissue distribution, expressed by the venom gland.

It localises to the secreted. Functionally, blocks Kv4.2/KCND2 voltage-gated potassium channels probably by shifting the voltage-dependence of channel activation to more depolarized potentials and by binding to the S3-S4 linker region of the voltage sensor domain. The protein is Kappa-theraphotoxin-Tb1c of Theraphosa blondi (Goliath birdeating spider).